The chain runs to 90 residues: MSRKVHCVKLQQEADGLDRPPYPGELGQRIYDNVSKQAWSMWVQQQTMLINEYRLTPADPKARSFLEREMENFFFGQGSAPPPDFSPDHS.

This sequence belongs to the Fe(2+)-trafficking protein family.

Its function is as follows. Could be a mediator in iron transactions between iron acquisition and iron-requiring processes, such as synthesis and/or repair of Fe-S clusters in biosynthetic enzymes. This Halorhodospira halophila (strain DSM 244 / SL1) (Ectothiorhodospira halophila (strain DSM 244 / SL1)) protein is Probable Fe(2+)-trafficking protein.